The following is a 397-amino-acid chain: Citrate synthase (397 aa).

Catalysis depends on residues H266 and D320.

This sequence belongs to the citrate synthase family.

The catalysed reaction is oxaloacetate + acetyl-CoA + H2O = citrate + CoA + H(+). It participates in carbohydrate metabolism; tricarboxylic acid cycle; isocitrate from oxaloacetate: step 1/2. The protein is Citrate synthase (gltA) of Synechocystis sp. (strain ATCC 27184 / PCC 6803 / Kazusa).